A 101-amino-acid chain; its full sequence is MAAPVSLQVEFGGGAELLFDGVKKHQVTLPSQPEPWDIRNLLKWIKQNLLKERPELFMQGESVRPGILVLINDADWELMGELDYKLQDQDNVLFISTLHGG.

The residue at position 101 (glycine 101) is a 1-thioglycine. Glycine 101 is covalently cross-linked (Glycyl lysine isopeptide (Gly-Lys) (interchain with K-? in acceptor proteins)).

It belongs to the URM1 family. In terms of processing, C-terminal thiocarboxylation occurs in 2 steps, it is first acyl-adenylated (-COAMP) via the hesA/moeB/thiF part of the MOCS3 homolog, then thiocarboxylated (-COSH) via the rhodanese domain of the MOCS3 homolog.

The protein resides in the cytoplasm. It participates in tRNA modification; 5-methoxycarbonylmethyl-2-thiouridine-tRNA biosynthesis. In terms of biological role, acts as a sulfur carrier required for 2-thiolation of mcm(5)S(2)U at tRNA wobble positions of cytosolic tRNA(Lys), tRNA(Glu) and tRNA(Gln). Serves as sulfur donor in tRNA 2-thiolation reaction by being thiocarboxylated (-COSH) at its C-terminus by MOCS3. The sulfur is then transferred to tRNA to form 2-thiolation of mcm(5)S(2)U. Also acts as a ubiquitin-like protein (UBL) that is covalently conjugated via an isopeptide bond to lysine residues of target proteins. The thiocarboxylated form serves as substrate for conjugation and oxidative stress specifically induces the formation of UBL-protein conjugates. The chain is Ubiquitin-related modifier 1 from Gallus gallus (Chicken).